Reading from the N-terminus, the 403-residue chain is MAKLIVSDVDVKDKKVLVRVDFNVPIKDGVIGDDNRIVAALPTIKYIIENGGKAILLSHLGRIKSDEDKKSLSLAPVAKRLGELLEKPVTFVPSNEGKEVEDAINNMKDGDVVVLENTRFQDIDNDFGKRESKNDPKLGEYWASLGDVFVNDAFGTAHRSHASNVGIATAMKAAGKPVAAGFLLEKEIKFLGNAVANPVHPFVTILGGAKVSDKIGVITNLIPKADHIIIGGGMAYTFLKAQGHNIGKSLVEDDKVEFAKELLEKAGDKLVLPIDHVAATEFNNDAASEVVGQDIPDNEMGLDIGPKTIELFKKTLEGAKTVVWNGPMGVFEMPNFAKGTLEVGRALADLPDATTIVGGGDSTAAAKQLGIAPKLTHISTGGGASLEYLEGKELPGIACVSDK.

Substrate contacts are provided by residues 21–23, Arg36, 59–62, Arg119, and Arg159; these read DFN and HLGR. Residues Lys214, Gly301, Glu332, and 359–362 each bind ATP; that span reads GGDS.

The protein belongs to the phosphoglycerate kinase family. In terms of assembly, monomer.

It localises to the cytoplasm. The enzyme catalyses (2R)-3-phosphoglycerate + ATP = (2R)-3-phospho-glyceroyl phosphate + ADP. Its pathway is carbohydrate degradation; glycolysis; pyruvate from D-glyceraldehyde 3-phosphate: step 2/5. The protein is Phosphoglycerate kinase of Lactobacillus delbrueckii subsp. lactis.